Consider the following 169-residue polypeptide: Benzoate 1,2-dioxygenase subunit beta (169 aa).

This sequence belongs to the bacterial ring-hydroxylating dioxygenase beta subunit family. This dioxygenase system consists of three proteins: the two subunits of the hydroxylase (BenA and BenB), and an electron transfer component (BenC).

It catalyses the reaction benzoate + NADH + O2 + H(+) = (1R,6S)-1,6-dihydroxycyclohexa-2,4-diene-1-carboxylate + NAD(+). The protein operates within aromatic compound metabolism; benzoate degradation via hydroxylation; catechol from benzoate: step 1/2. In terms of biological role, degradation of benzoate to 2-hydro-1,2-dihydroxybenzoate (DHB). The beta subunit may be responsible for the substrate specificity of the enzyme. This Acinetobacter baylyi (strain ATCC 33305 / BD413 / ADP1) protein is Benzoate 1,2-dioxygenase subunit beta (benB).